A 351-amino-acid polypeptide reads, in one-letter code: Anthranilate phosphoribosyltransferase (351 aa).

Residues G92, 95-96, T100, 102-105, 120-128, and S132 each bind 5-phospho-alpha-D-ribose 1-diphosphate; these read GD, NIST, and KHGNRAASS. G92 serves as a coordination point for anthranilate. S104 contributes to the Mg(2+) binding site. Residue N123 coordinates anthranilate. R178 is a binding site for anthranilate. Mg(2+)-binding residues include D236 and E237.

The protein belongs to the anthranilate phosphoribosyltransferase family. Homodimer. Requires Mg(2+) as cofactor.

It carries out the reaction N-(5-phospho-beta-D-ribosyl)anthranilate + diphosphate = 5-phospho-alpha-D-ribose 1-diphosphate + anthranilate. Its pathway is amino-acid biosynthesis; L-tryptophan biosynthesis; L-tryptophan from chorismate: step 2/5. In terms of biological role, catalyzes the transfer of the phosphoribosyl group of 5-phosphorylribose-1-pyrophosphate (PRPP) to anthranilate to yield N-(5'-phosphoribosyl)-anthranilate (PRA). This is Anthranilate phosphoribosyltransferase from Deinococcus geothermalis (strain DSM 11300 / CIP 105573 / AG-3a).